The following is a 36-amino-acid chain: Glucagon-2 (36 aa).

This sequence belongs to the glucagon family.

It is found in the secreted. Its function is as follows. Glucagon plays a key role in glucose metabolism and homeostasis. Regulates blood glucose by increasing gluconeogenesis and decreasing glycolysis. The chain is Glucagon-2 from Huso dauricus (Kaluga sturgeon).